A 183-amino-acid polypeptide reads, in one-letter code: Large ribosomal subunit protein bL27m (183 aa).

The transit peptide at 1 to 34 (MFLRPTSIPSAVSQIRAQLFAGPSSLASQIQVRW) directs the protein to the mitochondrion.

Belongs to the bacterial ribosomal protein bL27 family.

The protein localises to the mitochondrion. This Cryptococcus neoformans var. neoformans serotype D (strain B-3501A) (Filobasidiella neoformans) protein is Large ribosomal subunit protein bL27m (RPL27).